The sequence spans 432 residues: Glutamate-1-semialdehyde 2,1-aminomutase 1 (432 aa).

K272 is modified (N6-(pyridoxal phosphate)lysine).

It belongs to the class-III pyridoxal-phosphate-dependent aminotransferase family. HemL subfamily. In terms of assembly, homodimer. The cofactor is pyridoxal 5'-phosphate.

The protein resides in the cytoplasm. It catalyses the reaction (S)-4-amino-5-oxopentanoate = 5-aminolevulinate. Its pathway is porphyrin-containing compound metabolism; protoporphyrin-IX biosynthesis; 5-aminolevulinate from L-glutamyl-tRNA(Glu): step 2/2. The sequence is that of Glutamate-1-semialdehyde 2,1-aminomutase 1 from Exiguobacterium sibiricum (strain DSM 17290 / CCUG 55495 / CIP 109462 / JCM 13490 / 255-15).